Here is a 750-residue protein sequence, read N- to C-terminus: ABC transporter D family member 3 (750 aa).

The span at 1 to 14 (MKKNNVNNITETLN) shows a compositional bias: polar residues. Positions 1–32 (MKKNNVNNITETLNSSSSSSSSSGSSSDEEVK) are disordered. The span at 15-26 (SSSSSSSSSGSS) shows a compositional bias: low complexity. 4 consecutive transmembrane segments (helical) span residues 63-83 (IVII…LLFG), 123-143 (FAIG…SIMA), 188-208 (FTTL…VVVY), and 215-235 (TTID…GYFI). Positions 74–362 (PLLLFLLLFG…EQAKQQFEAL (289 aa)) constitute an ABC transmembrane type-1 domain. A coiled-coil region spans residues 334–370 (ALLKRSNKNIKNEELLVEEEQAKQQFEALLKNKKRVI). The chain crosses the membrane as a helical span at residues 382 to 402 (MFTFFSPLINYFIISIPVFFL). Residues 507 to 737 (ITLDDVTYFT…SNNINTINID (231 aa)) form the ABC transporter domain. An ATP-binding site is contributed by 540-547 (GPSGSGKS).

This sequence belongs to the ABC transporter superfamily. ABCD family. Peroxisomal fatty acyl CoA transporter (TC 3.A.1.203) subfamily.

Its subcellular location is the membrane. The protein is ABC transporter D family member 3 (abcD3) of Dictyostelium discoideum (Social amoeba).